We begin with the raw amino-acid sequence, 563 residues long: MESFALHSLSTTATSTLLSHHHHHHPSRLSLLRRTSSRSPPSTISLRSLSVQPLSFPLLKPIPRFSTRIAAAPQDNAPPPPPPSPSPSPSPQGAKLIPLILSISVGLILRFAVPVPEGVTPQGWQLLSIFLSTIAGLVLSPLPVGAWAFIGLTASIVTKTLSFSAAFSAFTSEVIWLIVISFFFARGFVKTGLGDRIATYFVKWLGKSTLGLSYGLTLSEALIAPAMPSTTARAGGIFLPIIKSLSLSAGSKPNDSSSRKLGSYLIQSQFQCAGNSSALFLTAAAQNLLCLKLAEELGVVISNPWVSWFKAASLPAIISLLCTPLILYKLYPPETKDTPEAPGIAATKLKQMGPVTKNEWIMVGTMLLAVTLWICGETLGIPSVVAAMIGLSILLVLGVLNWDDCLSEKSAWDTLAWFAVLVGMAGQLTNLGVVTWMSDCVAKVLQSLSLSWPAAFGLLQAAYFFIHYLFASQTGHVGALFSAFLAMHIAAGVPGILAALALAYNTNLFGALTHYSSGQAAVYYGAGYVDLPDVFKIGFVMATINAIIWGVVGTFWWKFLGLY.

The N-terminal 68 residues, 1-68 (MESFALHSLS…LKPIPRFSTR (68 aa)), are a transit peptide targeting the chloroplast. Disordered stretches follow at residues 16–45 (TLLS…STIS) and 71–92 (AAPQ…PSPQ). The segment covering 28-45 (RLSLLRRTSSRSPPSTIS) has biased composition (low complexity). The segment covering 76–90 (NAPPPPPPSPSPSPS) has biased composition (pro residues). 12 helical membrane-spanning segments follow: residues 96 to 116 (LIPL…VPVP), 134 to 154 (IAGL…GLTA), 165 to 185 (AAFS…FFFA), 234 to 254 (AGGI…SKPN), 261 to 281 (LGSY…ALFL), 308 to 328 (WFKA…LILY), 358 to 378 (NEWI…CGET), 379 to 399 (LGIP…VLGV), 414 to 434 (TLAW…LGVV), 450 to 470 (LSWP…HYLF), 483 to 503 (AFLA…LALA), and 537 to 557 (IGFV…TFWW).

Belongs to the SLC13A/DASS transporter (TC 2.A.47) family. DIT1 subfamily. In terms of tissue distribution, expressed in roots, rosette and cauline leaves, stems, flowers and siliques.

It is found in the plastid. The protein localises to the chloroplast inner membrane. Functionally, glutamate/malate translocator involved with DIT1 in primary ammonia assimilation and in the re-assimilation of ammonia generated by the photorespiratory pathway. Exports the end product of ammonia assimilation, glutamate, from plastids to the cytosol. The precursor for ammonia assimilation, 2-oxoglutarate, is imported from the cytosol by DIT1. The protein is Dicarboxylate transporter 2.1, chloroplastic (DIT2-1) of Arabidopsis thaliana (Mouse-ear cress).